A 312-amino-acid polypeptide reads, in one-letter code: D-alanine--D-alanine ligase (312 aa).

The region spanning 103-303 (KQQLVPHGIR…YADLVQAIVD (201 aa)) is the ATP-grasp domain. 130 to 186 (MPRPYVLKPVNEGSSVGVAIIKERDNHGVPIHRDSHGPWQTFATLLAEPFIRGRELT) lines the ATP pocket. 3 residues coordinate Mg(2+): D254, E270, and N272.

This sequence belongs to the D-alanine--D-alanine ligase family. Mg(2+) serves as cofactor. It depends on Mn(2+) as a cofactor.

It localises to the cytoplasm. It catalyses the reaction 2 D-alanine + ATP = D-alanyl-D-alanine + ADP + phosphate + H(+). Its pathway is cell wall biogenesis; peptidoglycan biosynthesis. In terms of biological role, cell wall formation. In Rhizorhabdus wittichii (strain DSM 6014 / CCUG 31198 / JCM 15750 / NBRC 105917 / EY 4224 / RW1) (Sphingomonas wittichii), this protein is D-alanine--D-alanine ligase.